Consider the following 94-residue polypeptide: MKITDVRVRHVSSDSRLKGVVTITFEDAFVVHDIRVIEGENGLFVAMPSKKMPNGGFRDIAHPIHADMRKQIEDSIIKAYKETLDAEATASVEE.

This sequence belongs to the SpoVG family.

Functionally, could be involved in septation. This chain is Putative septation protein SpoVG, found in Acholeplasma laidlawii (strain PG-8A).